We begin with the raw amino-acid sequence, 310 residues long: Low-salt glycan biosynthesis protein Agl12 (310 aa).

Residues 7-13, 32-35, and 58-59 contribute to the NAD(+) site; these read GGAGFIG, DALT, and DI. A substrate-binding site is contributed by S82. Residue T97 coordinates NAD(+). Substrate contacts are provided by residues T122 and 122–124; that span reads TDE. The active-site Proton donor is D123. Active-site proton acceptor residues include E124 and Y146. 146–150 provides a ligand contact to NAD(+); the sequence is YSATK. N175 is a substrate binding site. NAD(+) is bound at residue N176. Substrate contacts are provided by residues 185-186, 201-203, R210, N245, and 269-272; these read KL, PVY, and RAGH.

Belongs to the NAD(P)-dependent epimerase/dehydratase family. dTDP-glucose dehydratase subfamily. Requires NAD(+) as cofactor.

It functions in the pathway protein modification; protein glycosylation. The protein operates within cell surface structure biogenesis; S-layer biogenesis. In terms of biological role, lyase involved in N-glycan biosynthetic pathway that takes place under low-salt conditions (1.75 M instead of 3.4 M). Participates in the formation of the tetrasaccharide present at 'Asn-532' of S-layer glycoprotein Csg, consisting of a sulfated hexose, 2 hexoses and rhamnose. Involved in the addition of final rhamnose (sugar 4) of the tetrasaccharide on the dolichol phosphate carrier. The protein is Low-salt glycan biosynthesis protein Agl12 (agl12) of Haloferax volcanii (strain ATCC 29605 / DSM 3757 / JCM 8879 / NBRC 14742 / NCIMB 2012 / VKM B-1768 / DS2) (Halobacterium volcanii).